A 116-amino-acid chain; its full sequence is Large ribosomal subunit protein bL21c (116 aa).

This sequence belongs to the bacterial ribosomal protein bL21 family. As to quaternary structure, part of the 50S ribosomal subunit.

It localises to the plastid. It is found in the chloroplast. This protein binds to 23S rRNA. This Emiliania huxleyi (Coccolithophore) protein is Large ribosomal subunit protein bL21c.